The chain runs to 1347 residues: MDLLSGTYIFAVLLACVVFHSGAQEKNYTIREEMPENVLIGDLLKDLNLSLIPNKSLTTAMQFKLVYKTGDVPLIRIEEDTGEIFTTGARIDREKLCAGIPRDEHCFYEVEVAILPDEIFRLVKIRFLIEDINDNAPLFPATVINISIPENSAINSKYTLPAAVDPDVGTNGVQNYELIKSQNIFGLDVIETPEGDKMPQLIVQKELDREEKDTYVMKVKVEDGGFPQRSSTAILQVSVTDTNDNHPVFKETEIEVSIPENAPVGTSVTQLHATDADIGENAKIHFSFSNLVSNIARRLFHLNATTGLITIKEPLDREETPNHKLLVLASDGGLMPARAMVLVNVTDVNDNVPSIDIRYIVNPVNDTVVLSENIPLNTKIALITVTDKDADHNGRVTCFTDHEIPFRLRPVFSNQFLLETAAYLDYESTKEYAIKLLAADAGKPPLNQSAMLFIKVKDENDNAPVFTQSFVTVSIPENNSPGIQLTKVSATDADSGPNAEINYLLGPDAPPEFSLDRRTGMLTVVKKLDREKEDKYLFTILAKDNGVPPLTSNVTVFVSIIDQNDNSPVFTHNEYNFYVPENLPRHGTVGLITVTDPDYGDNSAVTLSILDENDDFTIDSQTGVIRPNISFDREKQESYTFYVKAEDGGRVSRSSSAKVTINVVDVNDNKPVFIVPPSNYSYELVLPSTNPGTVVFQVMAVDNDTGMNAEVRYSIVGGNTRDLFAIDQETGNITLMEKCDVTDLGLHRVLVKANDLGQPDSLFSVVIVNLFVNESVTNATLINELVRKSTEAPVTPNTEIADVSSPTSDYVKILVAAVAGTITVVVVIFITAVVRCRQAPHLKAAQKNKQNSEWATPNPENRQMIMMKKRKKKKKHSPKNLLLNFVTIEETKADDVDSDGNRVTLDLPIDLEEQTMGKYNWVTTPTTFKPDSPDLARHYKSASPQPAFQIQPETPLNSKHHIIQELPLDNTFVACDSISKCSSSSSDPYSVSDCGYPVTTFEVPVSVHTRPPMKEVVRSCTPMKESTTMEIWIHPQPQRKSEGKVAGKSQRRVTFHLPEGSQESSSDGGLGDHDAGSLTSTSHGLPLGYPQEEYFDRATPSNRTEGDGNSDPESTFIPGLKKAAEITVQPTVEEASDNCTQECLIYGHSDACWMPASLDHSSSSQAQASALCHSPPLSQASTQHHSPPVTQTIALCHSPPVTQTIALCHSPPPIQVSALHHSPPLVQATALHHSPPSAQASALCYSPPLAQAAAISHSSPLPQVIALHRSQAQSSVSLQQGWVQGADGLCSVDQGVQGSATSQFYTVSERLHPSDDSIKVIPLTTFTPRQQARPSRGDSPVMEEHPL.

The first 23 residues, 1–23 (MDLLSGTYIFAVLLACVVFHSGA), serve as a signal peptide directing secretion. At 24–812 (QEKNYTIREE…VSSPTSDYVK (789 aa)) the chain is on the extracellular side. Cadherin domains are found at residues 26–139 (KNYT…APLF), 140–249 (PATV…HPVF), 250–355 (KETE…VPSI), 362–466 (NPVN…APVF), 467–570 (TQSF…SPVF), 571–673 (THNE…KPVF), and 677–795 (PSNY…APVT). N27, N48, and N54 each carry an N-linked (GlcNAc...) asparagine glycan. A glycan (N-linked (GlcNAc...) asparagine) is linked at N344. Residue N553 is glycosylated (N-linked (GlcNAc...) asparagine). N-linked (GlcNAc...) asparagine glycosylation occurs at N773. Residues 813-833 (ILVAAVAGTITVVVVIFITAV) traverse the membrane as a helical segment. Residues 834–1347 (VRCRQAPHLK…DSPVMEEHPL (514 aa)) are Cytoplasmic-facing. Disordered regions lie at residues 1057–1091 (LPEG…GYPQ), 1097–1116 (RATP…ESTF), and 1325–1347 (TFTP…EHPL).

Its subcellular location is the cell membrane. In terms of biological role, potential calcium-dependent cell-adhesion protein. The sequence is that of Protocadherin-11 X-linked (PCDH11X) from Pan paniscus (Pygmy chimpanzee).